A 577-amino-acid polypeptide reads, in one-letter code: 5'-nucleotidase (577 aa).

The N-terminal stretch at 1 to 30 (MPRVPSASATGSSALLSLLCAFSLGRAAPF) is a signal peptide. Positions 39, 41, 86, and 118 each coordinate Zn(2+). N-linked (GlcNAc...) asparagine glycosylation occurs at N135. Zn(2+)-binding residues include H221 and H244. Residue N246 participates in substrate binding. 2 N-linked (GlcNAc...) asparagine glycosylation sites follow: N311 and N347. 2 disulfide bridges follow: C353-C358 and C365-C387. R354 contributes to the substrate binding site. Substrate-binding residues include Q390 and R395. A glycan (N-linked (GlcNAc...) asparagine) is linked at N403. F417 contacts substrate. A disulfide bridge connects residues C476 and C479. A substrate-binding site is contributed by 500–506 (YIAEGGD). Residue S552 is the site of GPI-anchor amidated serine attachment. Positions 553-577 (ATLPIINLKIGLSLFAFLTWFLHCS) are cleaved as a propeptide — removed in mature form.

Belongs to the 5'-nucleotidase family. As to quaternary structure, homodimer. Zn(2+) is required as a cofactor.

The protein localises to the cell membrane. The enzyme catalyses a ribonucleoside 5'-phosphate + H2O = a ribonucleoside + phosphate. Functionally, hydrolyzes extracellular nucleotides into membrane permeable nucleosides. In Diplobatis ommata (Ocellated electric ray), this protein is 5'-nucleotidase.